We begin with the raw amino-acid sequence, 276 residues long: MSAPTDQPPRSEGAQTNSSERSSQQQEQPQQSQSQNVPAKLLQHFQTNRIDSALWALRLLVIFFTVSYVLPIFTSQQSAFSKVMLANAAISALRLHQRLPAFAFSREFLARLFAEDSCHYMMYSLIFFNIRPSLLVLIPVLLYSVLHASSYSLKLLDLIGQNSWWGARFIISIVEFQAANILKATAFCEIFIMPYAIVLAFMNHAGLMTPVIYYHYLVMRYSSRRNPYPRNAFAELRITFEALAARSPPAFAKIIRGGIGFVNRLAPQLQPAAAQE.

The interval 1 to 37 (MSAPTDQPPRSEGAQTNSSERSSQQQEQPQQSQSQNV) is disordered. Residues 18–35 (SSERSSQQQEQPQQSQSQ) show a composition bias toward low complexity. Position 22 is a phosphoserine (Ser22). Helical transmembrane passes span 53-73 (ALWA…LPIF), 125-145 (LIFF…LYSV), and 181-201 (ILKA…VLAF).

The protein belongs to the PER33/POM33 family.

The protein localises to the membrane. Its function is as follows. Member of the dosage-dependent hierarchy effective upon white gene expression. This chain is Krueppel homolog 2 (Kr-h2), found in Drosophila melanogaster (Fruit fly).